Reading from the N-terminus, the 770-residue chain is MDGFRIIIAEKADAGRRIAYFLSGGQVKSHRAKGTSYLEFEYNGSKTYLIPLSGHIVEADFESGYSDWNKIDLSDLIDARIVKNIKNKVAYQTLQAFRGKVEEIVIATDYDREGELIGVEALDIIKEGKEEIRRAKFSALTKNEILDSFKNLIGVNYSLADAADARESIDLIWGSVLTRFFSVTTGRLGKSFLSAGRVQTPTLAIVVDREREIQSFRPERYWTISITFDKDGQFKARYPENIKDQDTAEKIYEAIKGKNGRVSSYTSKEDHIRRPAPFSTTEFLREASRIGIMPTKAMSIAENLYMRGLISYPRTDNTVYPRSINLKSVLKKLENTAYSKYVKEIETFDRILPSRGRIETTDHPPIYPVDSPKEQLKGDYGRVYDLILRHFLSTLYRDGKKTVAEAEIYVNGYTFKAAGQHTTDRGWTEIYGYDPKDVYLPELTEGEDLKAIDWNIQREETKPPPRYDMSSLLKKMEELNLGTKSTRHDIIGKLIERGFIEGNPVKPTPLGMAFIDAVRSVNSHIADPEMTAKLEEDMDRIEKNEMSKNDVVEESKKMLHEVLSHFLTKTADVKDIITKGINAGQEIGDCPFHEGKKIMVIRDRFTYTVRCEDPSCKINFRIKRNGSITLSDQKCPVCGLPMIKIIRKGQSPEIKCIDPDCSYNRENEDYGECPADHGRLVLRQSKYGKRFLGCSNYPKCTVTYPLPQMGRITKTGEVCPYCGAPILALSRNGRKWKFCPNMQCEYNKKRKPEAAVEKSVRKKGRNASKS.

Positions 4–140 constitute a Toprim domain; the sequence is FRIIIAEKAD…EIRRAKFSAL (137 aa). Glu10 and Asp109 together coordinate Mg(2+). The Topo IA-type catalytic domain occupies 156-563; the sequence is NYSLADAADA…ESKKMLHEVL (408 aa). The segment at 194-199 is interaction with DNA; it reads SAGRVQ. Residue Tyr312 is the O-(5'-phospho-DNA)-tyrosine intermediate of the active site. C4-type zinc fingers lie at residues 611–638, 673–700, and 719–744; these read CEDP…CPVC, CPAD…YPKC, and CPYC…NMQC.

Belongs to the type IA topoisomerase family. In terms of assembly, monomer. Requires Mg(2+) as cofactor.

The catalysed reaction is ATP-independent breakage of single-stranded DNA, followed by passage and rejoining.. Functionally, releases the supercoiling and torsional tension of DNA, which is introduced during the DNA replication and transcription, by transiently cleaving and rejoining one strand of the DNA duplex. Introduces a single-strand break via transesterification at a target site in duplex DNA. The scissile phosphodiester is attacked by the catalytic tyrosine of the enzyme, resulting in the formation of a DNA-(5'-phosphotyrosyl)-enzyme intermediate and the expulsion of a 3'-OH DNA strand. The free DNA strand then undergoes passage around the unbroken strand, thus removing DNA supercoils. Finally, in the religation step, the DNA 3'-OH attacks the covalent intermediate to expel the active-site tyrosine and restore the DNA phosphodiester backbone. This chain is DNA topoisomerase 1, found in Thermoplasma acidophilum (strain ATCC 25905 / DSM 1728 / JCM 9062 / NBRC 15155 / AMRC-C165).